A 265-amino-acid chain; its full sequence is Molybdenum-pterin-binding protein MopA (265 aa).

2 consecutive Mop domains span residues 126 to 192 and 198 to 264; these read RTSN…MLAA and RISA…ILAM.

Belongs to the ModE family.

This Rhodobacter capsulatus (Rhodopseudomonas capsulata) protein is Molybdenum-pterin-binding protein MopA (mopA).